We begin with the raw amino-acid sequence, 241 residues long: Ribonuclease PH (241 aa).

Phosphate is bound by residues arginine 87 and 125–127 (GTR).

Belongs to the RNase PH family. As to quaternary structure, homohexameric ring arranged as a trimer of dimers.

It carries out the reaction tRNA(n+1) + phosphate = tRNA(n) + a ribonucleoside 5'-diphosphate. Functionally, phosphorolytic 3'-5' exoribonuclease that plays an important role in tRNA 3'-end maturation. Removes nucleotide residues following the 3'-CCA terminus of tRNAs; can also add nucleotides to the ends of RNA molecules by using nucleoside diphosphates as substrates, but this may not be physiologically important. Probably plays a role in initiation of 16S rRNA degradation (leading to ribosome degradation) during starvation. The chain is Ribonuclease PH from Nitrosomonas europaea (strain ATCC 19718 / CIP 103999 / KCTC 2705 / NBRC 14298).